The sequence spans 126 residues: MAKITTDELIESFKEMTLIELSEFVSKFEEVFKVTAAAPVAAAAAPIEPAAEAAPEKTTFDVILEAAGDKKIQVIKEVRTITGLGLGEAKALVDGVPSKVLEGANKDAADAAKAQLEAAGAQVSVK.

This sequence belongs to the bacterial ribosomal protein bL12 family. As to quaternary structure, homodimer. Part of the ribosomal stalk of the 50S ribosomal subunit. Forms a multimeric L10(L12)X complex, where L10 forms an elongated spine to which 2 to 4 L12 dimers bind in a sequential fashion. Binds GTP-bound translation factors.

Its function is as follows. Forms part of the ribosomal stalk which helps the ribosome interact with GTP-bound translation factors. Is thus essential for accurate translation. In Tropheryma whipplei (strain TW08/27) (Whipple's bacillus), this protein is Large ribosomal subunit protein bL12.